The primary structure comprises 455 residues: Periplasmic pH-dependent serine endoprotease DegQ (455 aa).

A signal peptide spans 1 to 27 (MKKQTQLLSALALSVGLTLSASFQAVA). Substrate is bound by residues Glu59, His109, Asp139, Gly212, 212–214 (GNS), 230–234 (TAILA), and 269–273 (LGIKG). Residues His109 and Asp139 each act as charge relay system in the active site. Ser214 (charge relay system) is an active-site residue. PDZ domains are found at residues 258-349 (LIDF…LRNG) and 355-447 (EVTL…VRGN).

The protein belongs to the peptidase S1C family. In terms of assembly, degQ can reversibly switch between different oligomeric forms that represent inactive (6-mer) and active (12- and 24-mer) protease states. Substrate binding triggers the conversion of the resting DegQ trimer and hexamer into catalytically active 12- and 24-mers. The conversion of 6-mer (DegQ6) into 12-mer (DegQ12) or 24-mer (DegQ24) is crucial in regulating protease activity.

The protein resides in the periplasm. The enzyme catalyses Acts on substrates that are at least partially unfolded. The cleavage site P1 residue is normally between a pair of hydrophobic residues, such as Val-|-Val.. Inhibited by diisopropylfluorophosphate (DFP). Functionally, degQ could degrade transiently denatured and unfolded proteins which accumulate in the periplasm following stress conditions. DegQ is efficient with Val-Xaa and Ile-Xaa peptide bonds, suggesting a preference for a beta-branched side chain amino acids. Only unfolded proteins devoid of disulfide bonds appear capable to be cleaved, thereby preventing non-specific proteolysis of folded proteins. DegQ can substitute for the periplasmic protease DegP. The sequence is that of Periplasmic pH-dependent serine endoprotease DegQ (degQ) from Escherichia coli (strain K12).